Here is a 193-residue protein sequence, read N- to C-terminus: Putative manganese efflux pump MntP (193 aa).

6 helical membrane passes run 3 to 23 (LATLTVLGFSLSADAFAAALG), 39 to 59 (VGAYFGAFEAAAPLIGWALGL), 65 to 85 (IAAFDHWVAFTLLAGVGGHMV), 113 to 133 (LALAALATSIDATAVGIGLAV), 138 to 158 (ILMACALIGAITTVVAAGGVL), and 173 to 193 (VLGGLALIGIGLKILIEHLSA).

The protein belongs to the MntP (TC 9.B.29) family.

Its subcellular location is the cell inner membrane. Probably functions as a manganese efflux pump. This Rhodospirillum rubrum (strain ATCC 11170 / ATH 1.1.1 / DSM 467 / LMG 4362 / NCIMB 8255 / S1) protein is Putative manganese efflux pump MntP.